The primary structure comprises 200 residues: MEQLPSNLQVLLQAAEYVERREREAEHGYASILPCDPATPGRRKRQRTNSNPDNVRSVHNELEKHRRAQLRRCLEQLKQQVPLSMENSRHTTLSLLHRAKQHIKKLEDQELRAKSLKEKLRVEQQKLRQRLKQLLPPNTERIRTDSLDSSTLSSERSDSDQEDLEVDVEGIILSGNEGELFVSFSAGLEHSYSTPAHAWL.

2 disordered regions span residues 26–56 (EHGY…DNVR) and 134–164 (LLPP…QEDL). Positions 54 to 106 (NVRSVHNELEKHRRAQLRRCLEQLKQQVPLSMENSRHTTLSLLHRAKQHIKKL) constitute a bHLH domain.

Efficient DNA binding requires dimerization with another bHLH protein. Binds DNA as a heterodimer with MAX.

Its subcellular location is the nucleus. In terms of biological role, transcriptional repressor. Binds with MAX to form a sequence-specific DNA-binding protein complex which recognizes the core sequence 5'-CAC[GA]TG-3'. The chain is Max dimerization protein 3 (mxd3) from Xenopus tropicalis (Western clawed frog).